A 126-amino-acid polypeptide reads, in one-letter code: Holo-[acyl-carrier-protein] synthase (126 aa).

D8 and E57 together coordinate Mg(2+).

The protein belongs to the P-Pant transferase superfamily. AcpS family. Mg(2+) serves as cofactor.

The protein resides in the cytoplasm. The catalysed reaction is apo-[ACP] + CoA = holo-[ACP] + adenosine 3',5'-bisphosphate + H(+). In terms of biological role, transfers the 4'-phosphopantetheine moiety from coenzyme A to a Ser of acyl-carrier-protein. The sequence is that of Holo-[acyl-carrier-protein] synthase from Trichlorobacter lovleyi (strain ATCC BAA-1151 / DSM 17278 / SZ) (Geobacter lovleyi).